Consider the following 213-residue polypeptide: Thymidylate kinase (213 aa).

Gly10–Thr17 contacts ATP.

This sequence belongs to the thymidylate kinase family.

It catalyses the reaction dTMP + ATP = dTDP + ADP. Phosphorylation of dTMP to form dTDP in both de novo and salvage pathways of dTTP synthesis. In Synechococcus sp. (strain WH7803), this protein is Thymidylate kinase.